We begin with the raw amino-acid sequence, 198 residues long: Probable chemoreceptor glutamine deamidase CheD (198 aa).

It belongs to the CheD family.

The catalysed reaction is L-glutaminyl-[protein] + H2O = L-glutamyl-[protein] + NH4(+). In terms of biological role, probably deamidates glutamine residues to glutamate on methyl-accepting chemotaxis receptors (MCPs), playing an important role in chemotaxis. In Stenotrophomonas maltophilia (strain R551-3), this protein is Probable chemoreceptor glutamine deamidase CheD.